Here is a 95-residue protein sequence, read N- to C-terminus: Aspartyl/glutamyl-tRNA(Asn/Gln) amidotransferase subunit C (95 aa).

This sequence belongs to the GatC family. As to quaternary structure, heterotrimer of A, B and C subunits.

The enzyme catalyses L-glutamyl-tRNA(Gln) + L-glutamine + ATP + H2O = L-glutaminyl-tRNA(Gln) + L-glutamate + ADP + phosphate + H(+). It carries out the reaction L-aspartyl-tRNA(Asn) + L-glutamine + ATP + H2O = L-asparaginyl-tRNA(Asn) + L-glutamate + ADP + phosphate + 2 H(+). Functionally, allows the formation of correctly charged Asn-tRNA(Asn) or Gln-tRNA(Gln) through the transamidation of misacylated Asp-tRNA(Asn) or Glu-tRNA(Gln) in organisms which lack either or both of asparaginyl-tRNA or glutaminyl-tRNA synthetases. The reaction takes place in the presence of glutamine and ATP through an activated phospho-Asp-tRNA(Asn) or phospho-Glu-tRNA(Gln). The chain is Aspartyl/glutamyl-tRNA(Asn/Gln) amidotransferase subunit C from Rhizobium rhizogenes (strain K84 / ATCC BAA-868) (Agrobacterium radiobacter).